The primary structure comprises 107 residues: Thioredoxin (107 aa).

Positions 2–107 (SATPQVSDAS…TLASTLEKYL (106 aa)) constitute a Thioredoxin domain. An intrachain disulfide couples C32 to C35.

The protein belongs to the thioredoxin family.

In terms of biological role, component of the thioredoxin-thioredoxin reductase system. Participates in various redox reactions through the reversible oxidation of its active center dithiol to a disulfide and catalyzes dithiol-disulfide exchange reactions. This chain is Thioredoxin (trxA), found in Synechocystis sp. (strain ATCC 27184 / PCC 6803 / Kazusa).